Here is a 209-residue protein sequence, read N- to C-terminus: Small ribosomal subunit protein uS4 (209 aa).

The span at 1–13 (MSTKSRTRSKTRL) shows a compositional bias: basic residues. Disordered stretches follow at residues 1 to 20 (MSTKSRTRSKTRLSRALGIP) and 28 to 49 (YLEKRPYAPGEHGRSKRKQDSD). The 66-residue stretch at 95 to 160 (QRLDALVVRS…TEPFQVAAAG (66 aa)) folds into the S4 RNA-binding domain.

It belongs to the universal ribosomal protein uS4 family. Part of the 30S ribosomal subunit. Contacts protein S5. The interaction surface between S4 and S5 is involved in control of translational fidelity.

In terms of biological role, one of the primary rRNA binding proteins, it binds directly to 16S rRNA where it nucleates assembly of the body of the 30S subunit. With S5 and S12 plays an important role in translational accuracy. The sequence is that of Small ribosomal subunit protein uS4 from Clavibacter sepedonicus (Clavibacter michiganensis subsp. sepedonicus).